The primary structure comprises 131 residues: Plastocyanin (131 aa).

An N-terminal signal peptide occupies residues 1–34; it reads MKFFASLSKRFAPVLSLVVLVAGTLLLSAAPASA. The region spanning 35–131 is the Plastocyanin-like domain; sequence ATVQIKMGTD…AGMVGTITVE (97 aa). Positions 73, 116, 119, and 124 each coordinate Cu cation.

It belongs to the plastocyanin family. Cu(2+) is required as a cofactor.

The protein localises to the cellular thylakoid membrane. Participates in electron transfer between P700 and the cytochrome b6-f complex in photosystem I. This chain is Plastocyanin (petE), found in Prochlorothrix hollandica.